Reading from the N-terminus, the 417-residue chain is Serine--tRNA ligase (417 aa).

Position 226-228 (226-228 (TSE)) interacts with L-serine. ATP-binding positions include 257–259 (RRE) and V273. E280 contacts L-serine. 344 to 347 (ELTS) contacts ATP. T379 lines the L-serine pocket.

Belongs to the class-II aminoacyl-tRNA synthetase family. Type-1 seryl-tRNA synthetase subfamily. In terms of assembly, homodimer. The tRNA molecule binds across the dimer.

Its subcellular location is the cytoplasm. The enzyme catalyses tRNA(Ser) + L-serine + ATP = L-seryl-tRNA(Ser) + AMP + diphosphate + H(+). It carries out the reaction tRNA(Sec) + L-serine + ATP = L-seryl-tRNA(Sec) + AMP + diphosphate + H(+). The protein operates within aminoacyl-tRNA biosynthesis; selenocysteinyl-tRNA(Sec) biosynthesis; L-seryl-tRNA(Sec) from L-serine and tRNA(Sec): step 1/1. In terms of biological role, catalyzes the attachment of serine to tRNA(Ser). Is also able to aminoacylate tRNA(Sec) with serine, to form the misacylated tRNA L-seryl-tRNA(Sec), which will be further converted into selenocysteinyl-tRNA(Sec). This is Serine--tRNA ligase from Mycolicibacterium smegmatis (strain ATCC 700084 / mc(2)155) (Mycobacterium smegmatis).